Reading from the N-terminus, the 158-residue chain is Cyclic pyranopterin monophosphate synthase (158 aa).

Residues leucine 76–histidine 78 and methionine 114–glutamate 115 contribute to the substrate site. Residue aspartate 129 is part of the active site.

The protein belongs to the MoaC family. Homohexamer; trimer of dimers.

The catalysed reaction is (8S)-3',8-cyclo-7,8-dihydroguanosine 5'-triphosphate = cyclic pyranopterin phosphate + diphosphate. It participates in cofactor biosynthesis; molybdopterin biosynthesis. Catalyzes the conversion of (8S)-3',8-cyclo-7,8-dihydroguanosine 5'-triphosphate to cyclic pyranopterin monophosphate (cPMP). This is Cyclic pyranopterin monophosphate synthase from Shewanella sediminis (strain HAW-EB3).